The primary structure comprises 605 residues: Protein ZRG17 (605 aa).

The Cytoplasmic portion of the chain corresponds to 1 to 225; sequence METPQMNAIQ…DLLSNLPWPK (225 aa). A phosphoserine mark is found at Ser-16 and Ser-131. Residues 118–178 are disordered; it reads PAPKLVPPPP…PSSAASRTSF (61 aa). Residues 143–176 are compositionally biased toward polar residues; the sequence is SKRSSMTLDSPFNFTTSTLQPHQQTPPSSAASRT. The helical transmembrane segment at 226–246 threads the bilayer; it reads AYIQLSIAALQIFACLITFQV. Over 247 to 254 the chain is Lumenal; sequence GHLYSWSN. The helical transmembrane segment at 255 to 275 threads the bilayer; sequence FITLSHFITYDIIGSLVIIFV. Residues 276 to 287 are Cytoplasmic-facing; it reads ENLSQFQVWFTG. A helical membrane pass occupies residues 288–308; it reads TITFPFGLNRIDVLLSFALAV. Position 309 (Ser-309) is a topological domain, lumenal. Residues 310-330 traverse the membrane as a helical segment; that stretch reads LCFVGLDLLFHIIEEFIVLFV. Over 331–363 the chain is Cytoplasmic; that stretch reads ESGSSLTNNHDHDEINEQIPHSHIANANDSQNE. The helical transmembrane segment at 364–384 threads the bilayer; sequence NITLWYSILMINLVLSTLSLY. The Lumenal segment spans residues 385–399; it reads KTFYANKYSNLKTKN. Residues 400-420 traverse the membrane as a helical segment; it reads PIITITYTAYLFIYPLLLDLL. Residues 421 to 422 lie on the Cytoplasmic side of the membrane; that stretch reads SS. A helical transmembrane segment spans residues 423–443; it reads ISDYLATLVISSLILWHGLTI. Residues 444–545 lie on the Lumenal side of the membrane; sequence ARWTSTVLLM…ERLSEFKSRY (102 aa). A compositionally biased stretch (polar residues) spans 473–482; it reads DTTAHTQQVE. The tract at residues 473 to 497 is disordered; it reads DTTAHTQQVESKAAKEKPSVRPRSM. Ser-498 is modified (phosphoserine). Residues 546 to 566 traverse the membrane as a helical segment; sequence ILNYDDIVISKVNFTLYVVLI. Topologically, residues 567 to 605 are cytoplasmic; it reads KITMKGGSDDDELMLRLAIDKCIQTSIPTCETTIDIDRI.

The protein resides in the endoplasmic reticulum membrane. The protein is Protein ZRG17 (ZRG17) of Saccharomyces cerevisiae (strain ATCC 204508 / S288c) (Baker's yeast).